The sequence spans 359 residues: Fructose-bisphosphate aldolase (359 aa).

At Thr-11 the chain carries Phosphothreonine. Lys-27 is covalently cross-linked (Glycyl lysine isopeptide (Lys-Gly) (interchain with G-Cter in ubiquitin)). 2 positions are modified to phosphoserine: Ser-56 and Ser-63. Ser-63 contacts D-glyceraldehyde 3-phosphate. Residue Lys-73 forms a Glycyl lysine isopeptide (Lys-Gly) (interchain with G-Cter in ubiquitin) linkage. 2 positions are modified to phosphoserine: Ser-76 and Ser-83. A Glycyl lysine isopeptide (Lys-Gly) (interchain with G-Cter in ubiquitin) cross-link involves residue Lys-85. A Phosphoserine modification is found at Ser-96. The active-site Proton donor is the Asp-110. Residues His-111 and Asp-145 each coordinate Zn(2+). Phosphoserine is present on Ser-147. A Phosphothreonine modification is found at Thr-150. A Zn(2+)-binding site is contributed by Glu-175. Thr-179 carries the post-translational modification Phosphothreonine. Residue His-227 coordinates Zn(2+). Dihydroxyacetone phosphate is bound at residue Gly-228. Position 265 (His-265) interacts with Zn(2+). Dihydroxyacetone phosphate-binding positions include 266 to 268 (GGS) and 287 to 290 (NLDT). Ser-268 is modified (phosphoserine). A Phosphothreonine modification is found at Thr-290. Residue Lys-308 forms a Glycyl lysine isopeptide (Lys-Gly) (interchain with G-Cter in ubiquitin) linkage. Tyr-310 bears the Phosphotyrosine mark. Ser-313 is subject to Phosphoserine.

The protein belongs to the class II fructose-bisphosphate aldolase family. As to quaternary structure, homodimer. Zn(2+) serves as cofactor.

The enzyme catalyses beta-D-fructose 1,6-bisphosphate = D-glyceraldehyde 3-phosphate + dihydroxyacetone phosphate. Its pathway is carbohydrate degradation; glycolysis; D-glyceraldehyde 3-phosphate and glycerone phosphate from D-glucose: step 4/4. Functionally, catalyzes the aldol condensation of dihydroxyacetone phosphate (DHAP or glycerone-phosphate) with glyceraldehyde 3-phosphate (G3P) to form fructose 1,6-bisphosphate (FBP) in gluconeogenesis and the reverse reaction in glycolysis. The chain is Fructose-bisphosphate aldolase (FBA1) from Saccharomyces cerevisiae (strain ATCC 204508 / S288c) (Baker's yeast).